The following is a 165-amino-acid chain: Small histone ubiquitination factor 1 (165 aa).

A compositionally biased stretch (basic and acidic residues) spans 1-17 (MSSRRNDYHYDGNDHQY). The interval 1–86 (MSSRRNDYHY…STRASFGAAS (86 aa)) is disordered. 2 stretches are compositionally biased toward low complexity: residues 29 to 38 (SFYESSYRSR) and 50 to 60 (SSYDSPSSSTN). Polar residues predominate over residues 73–86 (PSNNSTRASFGAAS).

As to quaternary structure, component of the histone H2B ubiquitin ligase complex (HULC) composed of at least brl1, brl2, rhp6 and shf1.

The protein resides in the nucleus. The protein localises to the cytoplasm. It is found in the cytoskeleton. It localises to the microtubule organizing center. Its subcellular location is the spindle pole body. In terms of biological role, component of the histone H2B ubiquitin ligase complex (HULC) which plays a role in transcription regulation by catalyzing the monoubiquitination of histone H2B to form H2BK123ub1. H2BK123ub1 gives a specific tag for epigenetic transcriptional activation and is also a prerequisite for H3K4me and H3K79me formation. The sequence is that of Small histone ubiquitination factor 1 (shf1) from Schizosaccharomyces pombe (strain 972 / ATCC 24843) (Fission yeast).